The sequence spans 371 residues: tRNA-specific 2-thiouridylase MnmA (371 aa).

ATP-binding positions include 24–31 (AMSGGVDS) and Leu50. Cys120 acts as the Nucleophile in catalysis. A disulfide bond links Cys120 and Cys216. Residue Gly144 coordinates ATP. Residues 166 to 168 (KDQ) form an interaction with tRNA region. Catalysis depends on Cys216, which acts as the Cysteine persulfide intermediate.

This sequence belongs to the MnmA/TRMU family.

The protein resides in the cytoplasm. It catalyses the reaction S-sulfanyl-L-cysteinyl-[protein] + uridine(34) in tRNA + AH2 + ATP = 2-thiouridine(34) in tRNA + L-cysteinyl-[protein] + A + AMP + diphosphate + H(+). Functionally, catalyzes the 2-thiolation of uridine at the wobble position (U34) of tRNA, leading to the formation of s(2)U34. This is tRNA-specific 2-thiouridylase MnmA from Wolbachia sp. subsp. Brugia malayi (strain TRS).